Reading from the N-terminus, the 273-residue chain is Dermonecrotic toxin LhSicTox-alphaIA2ai (273 aa).

His-5 is a catalytic residue. Residues Glu-25 and Asp-27 each contribute to the Mg(2+) site. Catalysis depends on His-41, which acts as the Nucleophile. Cystine bridges form between Cys-45–Cys-51 and Cys-47–Cys-190. Asp-85 contributes to the Mg(2+) binding site.

This sequence belongs to the arthropod phospholipase D family. Class II subfamily. Mg(2+) is required as a cofactor. Expressed by the venom gland.

The protein resides in the secreted. It carries out the reaction an N-(acyl)-sphingosylphosphocholine = an N-(acyl)-sphingosyl-1,3-cyclic phosphate + choline. The enzyme catalyses an N-(acyl)-sphingosylphosphoethanolamine = an N-(acyl)-sphingosyl-1,3-cyclic phosphate + ethanolamine. It catalyses the reaction a 1-acyl-sn-glycero-3-phosphocholine = a 1-acyl-sn-glycero-2,3-cyclic phosphate + choline. The catalysed reaction is a 1-acyl-sn-glycero-3-phosphoethanolamine = a 1-acyl-sn-glycero-2,3-cyclic phosphate + ethanolamine. Dermonecrotic toxins cleave the phosphodiester linkage between the phosphate and headgroup of certain phospholipids (sphingolipid and lysolipid substrates), forming an alcohol (often choline) and a cyclic phosphate. This toxin acts on sphingomyelin (SM). It may also act on ceramide phosphoethanolamine (CPE), lysophosphatidylcholine (LPC) and lysophosphatidylethanolamine (LPE), but not on lysophosphatidylserine (LPS), and lysophosphatidylglycerol (LPG). It acts by transphosphatidylation, releasing exclusively cyclic phosphate products as second products. Induces dermonecrosis, hemolysis, increased vascular permeability, edema, inflammatory response, and platelet aggregation. The protein is Dermonecrotic toxin LhSicTox-alphaIA2ai of Loxosceles hirsuta (Recluse spider).